A 435-amino-acid chain; its full sequence is Putrescine transporter PotE (435 aa).

12 helical membrane passes run 8–28 (IGVV…GIIM), 39–59 (ISIV…YAFA), 95–115 (LVIA…ELFG), 117–137 (ILSP…ATVL), 148–168 (ISSF…IIGW), 185–205 (VPTF…FLGL), 224–244 (IAVL…TNVI), 275–295 (VIMG…QFTI), 320–340 (APVV…LMTI), 354–374 (LAVV…AVLL), 386–406 (TTVF…YAAG), and 409–429 (AMLY…FVSY).

Belongs to the amino acid-polyamine-organocation (APC) superfamily. Basic amino acid/polyamine antiporter (APA) (TC 2.A.3.2) family.

The protein resides in the cell inner membrane. The enzyme catalyses putrescine(in) + H(+)(in) = putrescine(out) + H(+)(out). The catalysed reaction is putrescine(in) + L-ornithine(out) = putrescine(out) + L-ornithine(in). Functionally, catalyzes both the uptake and excretion of putrescine. The uptake of putrescine is dependent on the membrane potential and the excretion involves putrescine-ornithine antiporter activity. The polypeptide is Putrescine transporter PotE (Haemophilus influenzae (strain ATCC 51907 / DSM 11121 / KW20 / Rd)).